The chain runs to 461 residues: Bifunctional protein GlmU (461 aa).

The segment at 1 to 232 is pyrophosphorylase; that stretch reads MNLQIIILAA…SFEVQGINNR (232 aa). Residues 8 to 11, Lys22, Gln73, and 78 to 79 contribute to the UDP-N-acetyl-alpha-D-glucosamine site; these read LAAG and GT. Asp102 provides a ligand contact to Mg(2+). The UDP-N-acetyl-alpha-D-glucosamine site is built by Gly142, Glu157, and Asn230. Position 230 (Asn230) interacts with Mg(2+). Residues 233–253 are linker; that stretch reads QQLQQLERTWQQRAANQLMEK. Residues 254 to 461 form an N-acetyltransferase region; that stretch reads GATLADANRF…WKRPVKRERD (208 aa). Positions 336 and 354 each coordinate UDP-N-acetyl-alpha-D-glucosamine. His366 serves as the catalytic Proton acceptor. Residues Tyr369 and Asn380 each contribute to the UDP-N-acetyl-alpha-D-glucosamine site. Residues Ala383, 389–390, Ser408, and Ala426 contribute to the acetyl-CoA site; that span reads NY.

In the N-terminal section; belongs to the N-acetylglucosamine-1-phosphate uridyltransferase family. It in the C-terminal section; belongs to the transferase hexapeptide repeat family. In terms of assembly, homotrimer. Mg(2+) is required as a cofactor.

It is found in the cytoplasm. The enzyme catalyses alpha-D-glucosamine 1-phosphate + acetyl-CoA = N-acetyl-alpha-D-glucosamine 1-phosphate + CoA + H(+). It carries out the reaction N-acetyl-alpha-D-glucosamine 1-phosphate + UTP + H(+) = UDP-N-acetyl-alpha-D-glucosamine + diphosphate. It functions in the pathway nucleotide-sugar biosynthesis; UDP-N-acetyl-alpha-D-glucosamine biosynthesis; N-acetyl-alpha-D-glucosamine 1-phosphate from alpha-D-glucosamine 6-phosphate (route II): step 2/2. It participates in nucleotide-sugar biosynthesis; UDP-N-acetyl-alpha-D-glucosamine biosynthesis; UDP-N-acetyl-alpha-D-glucosamine from N-acetyl-alpha-D-glucosamine 1-phosphate: step 1/1. The protein operates within bacterial outer membrane biogenesis; LPS lipid A biosynthesis. In terms of biological role, catalyzes the last two sequential reactions in the de novo biosynthetic pathway for UDP-N-acetylglucosamine (UDP-GlcNAc). The C-terminal domain catalyzes the transfer of acetyl group from acetyl coenzyme A to glucosamine-1-phosphate (GlcN-1-P) to produce N-acetylglucosamine-1-phosphate (GlcNAc-1-P), which is converted into UDP-GlcNAc by the transfer of uridine 5-monophosphate (from uridine 5-triphosphate), a reaction catalyzed by the N-terminal domain. The protein is Bifunctional protein GlmU of Legionella pneumophila (strain Paris).